The sequence spans 270 residues: Shikimate dehydrogenase (NADP(+)) (270 aa).

Shikimate contacts are provided by residues 15 to 17 (SKS) and Thr-62. The Proton acceptor role is filled by Lys-66. Residue Asp-78 coordinates NADP(+). Asn-87 and Asp-103 together coordinate shikimate. NADP(+) is bound by residues 128–132 (GAGGA), 152–157 (NRTVDR), and Leu-213. Tyr-215 is a shikimate binding site. Residue Gly-237 participates in NADP(+) binding.

Belongs to the shikimate dehydrogenase family. As to quaternary structure, homodimer.

The catalysed reaction is shikimate + NADP(+) = 3-dehydroshikimate + NADPH + H(+). It functions in the pathway metabolic intermediate biosynthesis; chorismate biosynthesis; chorismate from D-erythrose 4-phosphate and phosphoenolpyruvate: step 4/7. Functionally, involved in the biosynthesis of the chorismate, which leads to the biosynthesis of aromatic amino acids. Catalyzes the reversible NADPH linked reduction of 3-dehydroshikimate (DHSA) to yield shikimate (SA). This is Shikimate dehydrogenase (NADP(+)) from Halorhodospira halophila (strain DSM 244 / SL1) (Ectothiorhodospira halophila (strain DSM 244 / SL1)).